A 91-amino-acid polypeptide reads, in one-letter code: Small ribosomal subunit protein uS15 (91 aa).

This sequence belongs to the universal ribosomal protein uS15 family. As to quaternary structure, part of the 30S ribosomal subunit. Forms a bridge to the 50S subunit in the 70S ribosome, contacting the 23S rRNA.

Functionally, one of the primary rRNA binding proteins, it binds directly to 16S rRNA where it helps nucleate assembly of the platform of the 30S subunit by binding and bridging several RNA helices of the 16S rRNA. Its function is as follows. Forms an intersubunit bridge (bridge B4) with the 23S rRNA of the 50S subunit in the ribosome. The chain is Small ribosomal subunit protein uS15 from Synechococcus sp. (strain JA-2-3B'a(2-13)) (Cyanobacteria bacterium Yellowstone B-Prime).